Reading from the N-terminus, the 165-residue chain is Cathelicidin-7 (165 aa).

A signal peptide spans 1 to 29 (METQRASFSLGRSSLWLLLLGLVVPSASA). Positions 30-130 (QDLSYREAVL…FDITCNNIQS (101 aa)) are excised as a propeptide. 2 disulfides stabilise this stretch: C86-C97 and C108-C125. R164 bears the Arginine amide mark.

It belongs to the cathelicidin family. As to expression, expressed in bone marrow myeloid cells, spleen and testis.

Its subcellular location is the secreted. In terms of biological role, exerts a potent antimicrobial activity. This Bos taurus (Bovine) protein is Cathelicidin-7 (CATHL7).